Consider the following 246-residue polypeptide: Proteasome subunit alpha type-6 (246 aa).

The protein belongs to the peptidase T1A family. The 26S proteasome consists of a 20S proteasome core and two 19S regulatory subunits. The 20S proteasome core is composed of 28 subunits that are arranged in four stacked rings, resulting in a barrel-shaped structure. The two end rings are each formed by seven alpha subunits, and the two central rings are each formed by seven beta subunits. The catalytic chamber with the active sites is on the inside of the barrel.

It localises to the cytoplasm. Its subcellular location is the nucleus. In terms of biological role, the proteasome is a multicatalytic proteinase complex which is characterized by its ability to cleave peptides with Arg, Phe, Tyr, Leu, and Glu adjacent to the leaving group at neutral or slightly basic pH. The proteasome has an ATP-dependent proteolytic activity. This is Proteasome subunit alpha type-6 (PAA1) from Oryza sativa subsp. japonica (Rice).